We begin with the raw amino-acid sequence, 207 residues long: Large ribosomal subunit protein uL4 (207 aa).

The disordered stretch occupies residues 45–78; the sequence is RQGTHAVKNRSAVRGGGRKPWRQKGTGRARQGSI. Residues 60–71 are compositionally biased toward basic residues; the sequence is GGRKPWRQKGTG.

The protein belongs to the universal ribosomal protein uL4 family. As to quaternary structure, part of the 50S ribosomal subunit.

One of the primary rRNA binding proteins, this protein initially binds near the 5'-end of the 23S rRNA. It is important during the early stages of 50S assembly. It makes multiple contacts with different domains of the 23S rRNA in the assembled 50S subunit and ribosome. Functionally, forms part of the polypeptide exit tunnel. In Pediococcus pentosaceus (strain ATCC 25745 / CCUG 21536 / LMG 10740 / 183-1w), this protein is Large ribosomal subunit protein uL4.